We begin with the raw amino-acid sequence, 429 residues long: 3-isopropylmalate dehydratase large subunit (429 aa).

[4Fe-4S] cluster-binding residues include C303, C363, and C366.

It belongs to the aconitase/IPM isomerase family. LeuC type 2 subfamily. In terms of assembly, heterodimer of LeuC and LeuD. Requires [4Fe-4S] cluster as cofactor.

It catalyses the reaction (2R,3S)-3-isopropylmalate = (2S)-2-isopropylmalate. It participates in amino-acid biosynthesis; L-leucine biosynthesis; L-leucine from 3-methyl-2-oxobutanoate: step 2/4. Catalyzes the isomerization between 2-isopropylmalate and 3-isopropylmalate, via the formation of 2-isopropylmaleate. The polypeptide is 3-isopropylmalate dehydratase large subunit (Caldicellulosiruptor saccharolyticus (strain ATCC 43494 / DSM 8903 / Tp8T 6331)).